A 429-amino-acid chain; its full sequence is Glutamate-1-semialdehyde 2,1-aminomutase 2 (429 aa).

N6-(pyridoxal phosphate)lysine is present on Lys268.

It belongs to the class-III pyridoxal-phosphate-dependent aminotransferase family. HemL subfamily. In terms of assembly, homodimer. Pyridoxal 5'-phosphate serves as cofactor.

The protein localises to the cytoplasm. The catalysed reaction is (S)-4-amino-5-oxopentanoate = 5-aminolevulinate. The protein operates within porphyrin-containing compound metabolism; protoporphyrin-IX biosynthesis; 5-aminolevulinate from L-glutamyl-tRNA(Glu): step 2/2. In Bacillus cereus (strain AH187), this protein is Glutamate-1-semialdehyde 2,1-aminomutase 2.